The following is a 117-amino-acid chain: Large ribosomal subunit protein uL18 (117 aa).

It belongs to the universal ribosomal protein uL18 family. Part of the 50S ribosomal subunit; part of the 5S rRNA/L5/L18/L25 subcomplex. Contacts the 5S and 23S rRNAs.

In terms of biological role, this is one of the proteins that bind and probably mediate the attachment of the 5S RNA into the large ribosomal subunit, where it forms part of the central protuberance. This chain is Large ribosomal subunit protein uL18, found in Leuconostoc citreum (strain KM20).